A 489-amino-acid polypeptide reads, in one-letter code: Ent-kaurenoic acid oxidase 2 (489 aa).

Residues 5-25 (GLILMWFPLIILGLFVLKWVL) traverse the membrane as a helical segment. Residue Cys436 coordinates heme.

The protein belongs to the cytochrome P450 family. Heme is required as a cofactor. As to expression, widely expressed. Highly expressed in influorescence stem, influorescence, and silique tissue. Weakly expressed in cauline and rosette leaves. Expressed at a weaker level in stem and influorescence than AtKAO1/CYP88A3.

It localises to the endoplasmic reticulum membrane. The enzyme catalyses ent-kaur-16-en-19-oate + 3 reduced [NADPH--hemoprotein reductase] + 3 O2 = gibberellin A12 + 3 oxidized [NADPH--hemoprotein reductase] + 4 H2O + 4 H(+). The catalysed reaction is ent-kaur-16-en-19-oate + reduced [NADPH--hemoprotein reductase] + O2 = ent-7alpha-hydroxykaur-16-en-19-oate + oxidized [NADPH--hemoprotein reductase] + H2O + H(+). It catalyses the reaction ent-7alpha-hydroxykaur-16-en-19-oate + reduced [NADPH--hemoprotein reductase] + O2 = gibberellin A12 aldehyde + oxidized [NADPH--hemoprotein reductase] + 2 H2O + H(+). It carries out the reaction gibberellin A12 aldehyde + reduced [NADPH--hemoprotein reductase] + O2 = gibberellin A12 + oxidized [NADPH--hemoprotein reductase] + H2O + 2 H(+). It functions in the pathway plant hormone biosynthesis; gibberellin biosynthesis. Its function is as follows. Catalyzes three successive oxidations of ent-kaurenoic acid giving gibberellin 12 (GA12), a key step in gibberellins (GAs) biosynthesis. GAs, which are involved many processes, including stem elongation, play a central role in plant development. This is Ent-kaurenoic acid oxidase 2 from Arabidopsis thaliana (Mouse-ear cress).